A 302-amino-acid polypeptide reads, in one-letter code: 4-hydroxy-tetrahydrodipicolinate synthase (302 aa).

Threonine 55 is a pyruvate binding site. Catalysis depends on tyrosine 144, which acts as the Proton donor/acceptor. The Schiff-base intermediate with substrate role is filled by lysine 172. Valine 214 is a pyruvate binding site.

Belongs to the DapA family. Homotetramer; dimer of dimers.

It is found in the cytoplasm. The catalysed reaction is L-aspartate 4-semialdehyde + pyruvate = (2S,4S)-4-hydroxy-2,3,4,5-tetrahydrodipicolinate + H2O + H(+). It functions in the pathway amino-acid biosynthesis; L-lysine biosynthesis via DAP pathway; (S)-tetrahydrodipicolinate from L-aspartate: step 3/4. Functionally, catalyzes the condensation of (S)-aspartate-beta-semialdehyde [(S)-ASA] and pyruvate to 4-hydroxy-tetrahydrodipicolinate (HTPA). In Synechococcus sp. (strain CC9605), this protein is 4-hydroxy-tetrahydrodipicolinate synthase.